The chain runs to 512 residues: Histidine ammonia-lyase (512 aa).

Residues 146 to 148 (ASG) constitute a cross-link (5-imidazolinone (Ala-Gly)). Ser-147 is modified (2,3-didehydroalanine (Ser)).

It belongs to the PAL/histidase family. Contains an active site 4-methylidene-imidazol-5-one (MIO), which is formed autocatalytically by cyclization and dehydration of residues Ala-Ser-Gly.

The protein resides in the cytoplasm. It carries out the reaction L-histidine = trans-urocanate + NH4(+). It participates in amino-acid degradation; L-histidine degradation into L-glutamate; N-formimidoyl-L-glutamate from L-histidine: step 1/3. In Paracidovorax citrulli (strain AAC00-1) (Acidovorax citrulli), this protein is Histidine ammonia-lyase.